The sequence spans 93 residues: DNA/RNA-binding protein Alba (93 aa).

Lysine 11 carries the N6-acetyllysine modification.

It belongs to the histone-like Alba family. Post-translationally, acetylated. Acetylation at Lys-11 decreases DNA-binding affinity.

Its subcellular location is the cytoplasm. The protein localises to the chromosome. Binds double-stranded DNA tightly but without sequence specificity. Involved in DNA compaction. The protein is DNA/RNA-binding protein Alba of Pyrococcus furiosus (strain ATCC 43587 / DSM 3638 / JCM 8422 / Vc1).